We begin with the raw amino-acid sequence, 260 residues long: Adenosylcobinamide-GDP ribazoletransferase (260 aa).

Helical transmembrane passes span 31 to 51 (IIFF…LVNI), 55 to 75 (IFSS…VRGI), 111 to 131 (VIGV…FAFV), 140 to 160 (FLIF…LMYY), 177 to 197 (ISSW…VYFT), 202 to 222 (FIFL…LKKF), and 234 to 254 (HLGA…LLGE).

Belongs to the CobS family. Mg(2+) serves as cofactor.

It is found in the cell inner membrane. The catalysed reaction is alpha-ribazole + adenosylcob(III)inamide-GDP = adenosylcob(III)alamin + GMP + H(+). It carries out the reaction alpha-ribazole 5'-phosphate + adenosylcob(III)inamide-GDP = adenosylcob(III)alamin 5'-phosphate + GMP + H(+). The protein operates within cofactor biosynthesis; adenosylcobalamin biosynthesis; adenosylcobalamin from cob(II)yrinate a,c-diamide: step 7/7. Functionally, joins adenosylcobinamide-GDP and alpha-ribazole to generate adenosylcobalamin (Ado-cobalamin). Also synthesizes adenosylcobalamin 5'-phosphate from adenosylcobinamide-GDP and alpha-ribazole 5'-phosphate. The chain is Adenosylcobinamide-GDP ribazoletransferase from Thermodesulfovibrio yellowstonii (strain ATCC 51303 / DSM 11347 / YP87).